Consider the following 552-residue polypeptide: Hydroxylamine reductase (552 aa).

[4Fe-4S] cluster-binding residues include cysteine 3, cysteine 6, cysteine 15, and cysteine 21. Residues histidine 247, glutamate 271, cysteine 315, cysteine 407, cysteine 435, cysteine 460, glutamate 495, and lysine 497 each contribute to the hybrid [4Fe-2O-2S] cluster site. At cysteine 407 the chain carries Cysteine persulfide.

This sequence belongs to the HCP family. Requires [4Fe-4S] cluster as cofactor. The cofactor is hybrid [4Fe-2O-2S] cluster.

Its subcellular location is the cytoplasm. It carries out the reaction A + NH4(+) + H2O = hydroxylamine + AH2 + H(+). Its function is as follows. Catalyzes the reduction of hydroxylamine to form NH(3) and H(2)O. This is Hydroxylamine reductase from Thermosipho melanesiensis (strain DSM 12029 / CIP 104789 / BI429).